We begin with the raw amino-acid sequence, 1083 residues long: Alpha-mannosidase (1083 aa).

N-acetylserine is present on serine 2. Zn(2+)-binding residues include histidine 298, aspartate 300, aspartate 411, and histidine 626. The Nucleophile role is filled by aspartate 411.

Belongs to the glycosyl hydrolase 38 family. In terms of assembly, composed of isoforms with three constituent polypeptides described as [(107 kDa)-n (73 kDa)-(6-n) (31 kDa)-(6-n)], where n is 0-6. The 73 kDa and the 31 kDa polypeptides may be proteolytic derivatives of the 107 kDa polypeptide in the vacuole. Oligomerizes in the cytoplasm and retains its oligomeric form during import into the vacuole. The cofactor is Zn(2+). Post-translationally, the N-terminus is blocked.

The protein resides in the vacuole. The enzyme catalyses Hydrolysis of terminal, non-reducing alpha-D-mannose residues in alpha-D-mannosides.. Its function is as follows. Degrades free oligosaccharides in the vacuole. The polypeptide is Alpha-mannosidase (AMS1) (Saccharomyces cerevisiae (strain ATCC 204508 / S288c) (Baker's yeast)).